We begin with the raw amino-acid sequence, 156 residues long: Ribosome maturation factor RimP (156 aa).

Belongs to the RimP family.

Its subcellular location is the cytoplasm. Required for maturation of 30S ribosomal subunits. This Prochlorococcus marinus (strain NATL1A) protein is Ribosome maturation factor RimP.